The following is a 521-amino-acid chain: Histone deacetylase HDAC1 (521 aa).

Residues 7–319 are histone deacetylase; the sequence is KRVCYYYDSD…WTYETSVALA (313 aa). The active site involves His-139. Positions 376–521 are disordered; that stretch reads GVQIQAIPED…GAKGAKENNI (146 aa). Over residues 386 to 395 the composition is skewed to acidic residues; sequence AINDESDDED. The residue at position 391 (Ser-391) is a Phosphoserine. Residues 396 to 414 are compositionally biased toward basic and acidic residues; it reads KVDKDDRLPQSDKDKRIVP. Residues Ser-419, Ser-421, and Ser-455 each carry the phosphoserine modification. The residue at position 457 (Thr-457) is a Phosphothreonine. A compositionally biased stretch (basic and acidic residues) spans 459 to 470; it reads SEIKDEKEKGDG. A compositionally biased stretch (low complexity) spans 476–502; it reads STASNTNSNNNSNNKSDNDAGATANAG. Positions 503 to 513 are enriched in gly residues; the sequence is SGSGSGSGAGA.

The protein belongs to the histone deacetylase family. HD type 1 subfamily. As to quaternary structure, component of a form of the Esc/E(z) complex present specifically during early embryogenesis which is composed of Caf1-55, esc, E(z), Su(z)12, Pcl and HDAC1. The Esc/E(z) complex may also associate with Pcl and HDAC1 during early embryogenesis. This complex is distinct from the PRC1 complex, which contains many other PcG proteins like Pc, Ph, Psc, Su(z)2. The 2 complexes however cooperate and interact together during the first 3 hours of development to establish PcG silencing. Interacts with the histone methyltransferase Su(var)3-9. Component of a complex that contains at least HDAC1, CoRest and Su(var)3-3/Hdm. Component of the DREAM complex at least composed of Myb, Caf1-55, mip40, mip120, mip130, E2f2, Dp, Rbf, Rbf2, lin-52, HDAC1 and l(3)mbt. Interacts with the chromatin-remodeler Mi-2. Interacts with Rrp6.

It is found in the nucleus. The enzyme catalyses N(6)-acetyl-L-lysyl-[histone] + H2O = L-lysyl-[histone] + acetate. Functionally, catalyzes the deacetylation of lysine residues on the N-terminal part of the core histones (H2A, H2B, H3 and H4). Histone deacetylation may constitute a tag for epigenetic repression and plays an important role in transcriptional regulation, cell cycle progression and developmental events. For instance, deacetylation of histone H3 may be a prerequisite for the subsequent recruitment of the histone methyltransferase Su(var)3-9 to histones. Involved in position-effect variegation (PEV). In the larval brain, part of a regulatory network including the transcriptional repressors klu, dpn and E(spl)mgamma-HLH which is required for type II neuroblast self-renewal and for maintaining erm in an inactive state in intermediate neural progenitors (INP). This Drosophila melanogaster (Fruit fly) protein is Histone deacetylase HDAC1.